The primary structure comprises 126 residues: Large ribosomal subunit protein bL12 (126 aa).

This sequence belongs to the bacterial ribosomal protein bL12 family. Homodimer. Part of the ribosomal stalk of the 50S ribosomal subunit. Forms a multimeric L10(L12)X complex, where L10 forms an elongated spine to which 2 to 4 L12 dimers bind in a sequential fashion. Binds GTP-bound translation factors.

Its function is as follows. Forms part of the ribosomal stalk which helps the ribosome interact with GTP-bound translation factors. Is thus essential for accurate translation. The polypeptide is Large ribosomal subunit protein bL12 (Acidovorax ebreus (strain TPSY) (Diaphorobacter sp. (strain TPSY))).